Reading from the N-terminus, the 59-residue chain is Large ribosomal subunit protein bL32c (59 aa).

The tract at residues 36 to 59 (KSRSFSGVSEHPKPKGFSRQQTNK) is disordered.

The protein belongs to the bacterial ribosomal protein bL32 family.

The protein resides in the plastid. Its subcellular location is the chloroplast. In Oryza nivara (Indian wild rice), this protein is Large ribosomal subunit protein bL32c.